The sequence spans 305 residues: N-acyl-aromatic-L-amino acid amidohydrolase (carboxylate-forming) (305 aa).

Positions 15 and 18 each coordinate Zn(2+). Substrate-binding positions include R57 and 64–65 (NR). H108 is a Zn(2+) binding site. The substrate site is built by E171 and Y281.

The protein belongs to the AspA/AstE family. Aspartoacylase subfamily. As to quaternary structure, homotetramer. The cofactor is Zn(2+).

It localises to the apical cell membrane. Its subcellular location is the cytoplasm. It carries out the reaction an N-acyl-aromatic L-alpha-amino acid + H2O = an aromatic L-alpha-amino acid + a carboxylate. It catalyses the reaction an N-acetyl-L-cysteine-S-conjugate + H2O = an S-substituted L-cysteine + acetate. Functionally, plays an important role in deacetylating mercapturic acids in kidney proximal tubules. In Xenopus laevis (African clawed frog), this protein is N-acyl-aromatic-L-amino acid amidohydrolase (carboxylate-forming) (acy3).